A 519-amino-acid chain; its full sequence is Probable cytochrome P450 6g2 (519 aa).

Cysteine 460 contributes to the heme binding site.

The protein belongs to the cytochrome P450 family. Requires heme as cofactor.

The protein localises to the endoplasmic reticulum membrane. It localises to the microsome membrane. May be involved in the metabolism of insect hormones and in the breakdown of synthetic insecticides. The sequence is that of Probable cytochrome P450 6g2 (Cyp6g2) from Drosophila melanogaster (Fruit fly).